The chain runs to 102 residues: PE family immunomodulator PE5 (102 aa).

The region spanning 3–92 (LRVVPEGLAA…GASYLAGDAA (90 aa)) is the PE domain.

It belongs to the mycobacterial PE family.

It is found in the secreted. The protein localises to the cell envelope. The protein resides in the cell surface. Its function is as follows. Important for the siderophore-mediated iron-acquisition function of ESX-3. May play a pivotal role in the evasion of host immune response by M.tuberculosis. Mediates production of IL-10 via activation of the p38 and ERK1/2 mitogen-activated protein kinase (MAPK) signaling pathways. In Mycobacterium tuberculosis (strain ATCC 25618 / H37Rv), this protein is PE family immunomodulator PE5.